We begin with the raw amino-acid sequence, 107 residues long: U1-lycotoxin-Ls1b (107 aa).

A signal peptide spans 1–20; that stretch reads MMKVLVVVALLATLISYSSS. Residues 21–41 constitute a propeptide that is removed on maturation; the sequence is EGIDDLEADELLSLMANEQTR. Cystine bridges form between Cys-44-Cys-59, Cys-51-Cys-68, Cys-58-Cys-86, and Cys-70-Cys-84.

The protein belongs to the neurotoxin 19 (CSTX) family. 04 (U1-Lctx) subfamily. Expressed by the venom gland.

It is found in the secreted. In Lycosa singoriensis (Wolf spider), this protein is U1-lycotoxin-Ls1b.